The following is a 206-amino-acid chain: Imidazole glycerol phosphate synthase subunit HisH (206 aa).

In terms of domain architecture, Glutamine amidotransferase type-1 spans 1 to 206 (MIVIIDYGMG…LRILKNFGDM (206 aa)). Cys79 serves as the catalytic Nucleophile. Catalysis depends on residues His188 and Glu190.

In terms of assembly, heterodimer of HisH and HisF.

The protein localises to the cytoplasm. The catalysed reaction is 5-[(5-phospho-1-deoxy-D-ribulos-1-ylimino)methylamino]-1-(5-phospho-beta-D-ribosyl)imidazole-4-carboxamide + L-glutamine = D-erythro-1-(imidazol-4-yl)glycerol 3-phosphate + 5-amino-1-(5-phospho-beta-D-ribosyl)imidazole-4-carboxamide + L-glutamate + H(+). The enzyme catalyses L-glutamine + H2O = L-glutamate + NH4(+). It functions in the pathway amino-acid biosynthesis; L-histidine biosynthesis; L-histidine from 5-phospho-alpha-D-ribose 1-diphosphate: step 5/9. Functionally, IGPS catalyzes the conversion of PRFAR and glutamine to IGP, AICAR and glutamate. The HisH subunit catalyzes the hydrolysis of glutamine to glutamate and ammonia as part of the synthesis of IGP and AICAR. The resulting ammonia molecule is channeled to the active site of HisF. The chain is Imidazole glycerol phosphate synthase subunit HisH from Syntrophotalea carbinolica (strain DSM 2380 / NBRC 103641 / GraBd1) (Pelobacter carbinolicus).